A 448-amino-acid chain; its full sequence is 4-hydroxybenzoate transporter PcaK (448 aa).

Topologically, residues 1–30 (MNQAQNSVGKSLDVQSFINQQPLSRYQWRV) are cytoplasmic. A helical transmembrane segment spans residues 31 to 51 (VLLCFLIVFLDGLDTAAMGFI). The Periplasmic portion of the chain corresponds to 52-67 (APALSQEWGIDRASLG). The helical transmembrane segment at 68 to 88 (PVMSAALIGMVFGALGSGPLA) threads the bilayer. Topologically, residues 89–94 (DRFGRK) are cytoplasmic. The helical transmembrane segment at 95–115 (GVLVGAVLVFGGFSLASAYAT) threads the bilayer. The Periplasmic portion of the chain corresponds to 116–119 (NVDQ). A helical transmembrane segment spans residues 120 to 140 (LLVLRFLTGLGLGAGMPNATT). Residues 141–152 (LLSEYTPERLKS) are Cytoplasmic-facing. A helical transmembrane segment spans residues 153-173 (LLVTSMFCGFNLGMAGGGFIS). The Periplasmic portion of the chain corresponds to 174-184 (AKMIPAYGWHS). The helical transmembrane segment at 185-205 (LLVIGGVLPLLLALVLMVWLP) threads the bilayer. The Cytoplasmic segment spans residues 206 to 261 (ESARFLVVRNRGTDKIRKTLSPIAPQVVAEAGSFSVPEQKAVAARSVFAVIFSGTY). A helical membrane pass occupies residues 262 to 282 (GLGTMLLWLTYFMGLVIVYLL). At 283–301 (TSWLPTLMRDSGASMEQAA) the chain is on the periplasmic side. The helical transmembrane segment at 302 to 322 (FIGALFQFGGVLSAVGVGWAM) threads the bilayer. At 323–329 (DRYNPHK) the chain is on the cytoplasmic side. The helical transmembrane segment at 330–350 (VIGIFYLLAGVFAYAVGQSLG) threads the bilayer. A topological domain (periplasmic) is located at residue asparagine 351. Residues 352–372 (ITVLATLVLIAGMCVNGAQSA) form a helical membrane-spanning segment. Topologically, residues 373-398 (MPSLAARFYPTQGRATGVSWMLGIGR) are cytoplasmic. A helical transmembrane segment spans residues 399-419 (FGAILGAWSGATLLGLGWNFE). At 420–421 (QV) the chain is on the periplasmic side. A helical membrane pass occupies residues 422 to 442 (LTALLVPAALATVGVIVKGLV). Topologically, residues 443–448 (SHADAT) are cytoplasmic.

The protein belongs to the major facilitator superfamily. Aromatic acid:H(+) symporter (AAHS) (TC 2.A.1.15) family.

The protein localises to the cell inner membrane. In terms of biological role, transports 4-hydroxybenzoate (4-HBA) and protocatechuate across the membrane. Driven by the proton motive force. Also functions as a chemoreceptor, which is required for chemotaxis to aromatic acids. In Pseudomonas putida (Arthrobacter siderocapsulatus), this protein is 4-hydroxybenzoate transporter PcaK (pcaK).